We begin with the raw amino-acid sequence, 161 residues long: Cyclic pyranopterin monophosphate synthase (161 aa).

Residues 78–80 (LCH) and 116–117 (ME) each bind substrate. Asp131 is a catalytic residue.

The protein belongs to the MoaC family. In terms of assembly, homohexamer; trimer of dimers.

It carries out the reaction (8S)-3',8-cyclo-7,8-dihydroguanosine 5'-triphosphate = cyclic pyranopterin phosphate + diphosphate. The protein operates within cofactor biosynthesis; molybdopterin biosynthesis. Functionally, catalyzes the conversion of (8S)-3',8-cyclo-7,8-dihydroguanosine 5'-triphosphate to cyclic pyranopterin monophosphate (cPMP). The chain is Cyclic pyranopterin monophosphate synthase from Bordetella pertussis (strain Tohama I / ATCC BAA-589 / NCTC 13251).